Here is a 461-residue protein sequence, read N- to C-terminus: Tip elongation protein 1 (461 aa).

Residues 22–69 (GEVENRKGVYVGLELLPEFAEFGKNRGVVDGREYFKTKNNEKTGIFVP) enclose the CAP-Gly domain. Phosphoserine is present on residues Ser-82, Ser-84, Ser-289, Ser-294, and Ser-305. Residues 134–418 (TEKILQKRIE…RMSPAEFELE (285 aa)) are a coiled coil. Positions 278–303 (KANSSTANEKLSHMESSSPTLTNASF) are enriched in polar residues. The segment at 278–323 (KANSSTANEKLSHMESSSPTLTNASFESPKRGKGSNDLPENHPQRR) is disordered. Position 367 is a phosphothreonine (Thr-367). The segment at 417-437 (LETTQEVEENDSDSHDDEETW) is disordered.

Monomer. Interacts with tea1 and tea2. Interacts with tea4 in the presence of tea1.

It is found in the cytoplasm. It localises to the cytoskeleton. Has a role in stabilizing and targeting the growing tips of the microtubules along the long axis of the cell, directing them to the ends of the cell. Acts as a cargo for tea2. This Schizosaccharomyces pombe (strain 972 / ATCC 24843) (Fission yeast) protein is Tip elongation protein 1 (tip1).